We begin with the raw amino-acid sequence, 64 residues long: Ferredoxin-like protein in nif region (64 aa).

A 4Fe-4S ferredoxin-type domain is found at 2 to 30; it reads AFKIIASQCTQCGACEFECPSGAISFKTD. Cys-10, Cys-13, Cys-16, Cys-20, Cys-39, Cys-42, Cys-51, and Cys-55 together coordinate [4Fe-4S] cluster.

Requires [4Fe-4S] cluster as cofactor.

This Rhizobium leguminosarum bv. trifolii protein is Ferredoxin-like protein in nif region (fdxN).